A 690-amino-acid polypeptide reads, in one-letter code: Elongation factor G (690 aa).

In terms of domain architecture, tr-type G spans 8–283 (EDYRNFGIMA…AVVDFLPSPL (276 aa)). Residues 17-24 (AHIDAGKT), 81-85 (DTPGH), and 135-138 (NKMD) each bind GTP.

It belongs to the TRAFAC class translation factor GTPase superfamily. Classic translation factor GTPase family. EF-G/EF-2 subfamily.

Its subcellular location is the cytoplasm. Functionally, catalyzes the GTP-dependent ribosomal translocation step during translation elongation. During this step, the ribosome changes from the pre-translocational (PRE) to the post-translocational (POST) state as the newly formed A-site-bound peptidyl-tRNA and P-site-bound deacylated tRNA move to the P and E sites, respectively. Catalyzes the coordinated movement of the two tRNA molecules, the mRNA and conformational changes in the ribosome. The protein is Elongation factor G of Nitrobacter hamburgensis (strain DSM 10229 / NCIMB 13809 / X14).